A 346-amino-acid polypeptide reads, in one-letter code: Phenylalanine--tRNA ligase alpha subunit (346 aa).

Glutamate 261 serves as a coordination point for Mg(2+).

This sequence belongs to the class-II aminoacyl-tRNA synthetase family. Phe-tRNA synthetase alpha subunit type 1 subfamily. In terms of assembly, tetramer of two alpha and two beta subunits. Mg(2+) serves as cofactor.

Its subcellular location is the cytoplasm. It carries out the reaction tRNA(Phe) + L-phenylalanine + ATP = L-phenylalanyl-tRNA(Phe) + AMP + diphosphate + H(+). In Streptococcus agalactiae serotype Ia (strain ATCC 27591 / A909 / CDC SS700), this protein is Phenylalanine--tRNA ligase alpha subunit.